Reading from the N-terminus, the 257-residue chain is 5'-nucleotidase SurE (257 aa).

Aspartate 9, aspartate 10, serine 42, and asparagine 96 together coordinate a divalent metal cation.

This sequence belongs to the SurE nucleotidase family. A divalent metal cation serves as cofactor.

The protein resides in the cytoplasm. The enzyme catalyses a ribonucleoside 5'-phosphate + H2O = a ribonucleoside + phosphate. In terms of biological role, nucleotidase that shows phosphatase activity on nucleoside 5'-monophosphates. In Campylobacter lari (strain RM2100 / D67 / ATCC BAA-1060), this protein is 5'-nucleotidase SurE.